A 372-amino-acid polypeptide reads, in one-letter code: MKYDLIIIGSGSVGAAAGYYATRAGLKVLMTDAHMPPHQQGSHHGDTRLIRHAYGEGEKYVPLVLRAQALWDELSTHNEEPIFVRSGVVNLGPADSAFLANVARSAQQWQLNVERLDATALMTRWPEIRVPDNYIGLFEADSGFLRSELAITTWLRLAREAGCAQLFNSPVSHIHHDDNGVTIETSEGCYHASKALISAGTWVKALVPELPVQPVRKVFAWFKADGRYSTKNRFPAFTGEMPNGDQYYGFPAENDELKIGKHNGGQLIQAQEERKPFAAVASDGAEAFPFLRNVLPGIGGCLHGAACTYDNSPDEDFIIDTLPGHENTLVITGLSGHGFKFAPVLGEIAADFALGKTPSFDLTPFRLSRFSQ.

An FAD-binding site is contributed by 4 to 34 (DLIIIGSGSVGAAAGYYATRAGLKVLMTDAH). C307 bears the S-8alpha-FAD cysteine mark.

Belongs to the MSOX/MTOX family. MTOX subfamily. As to quaternary structure, monomer. Requires FAD as cofactor.

The catalysed reaction is N(alpha)-methyl-L-tryptophan + O2 + H2O = L-tryptophan + formaldehyde + H2O2. Functionally, catalyzes the oxidative demethylation of N-methyl-L-tryptophan. The protein is N-methyl-L-tryptophan oxidase of Salmonella newport (strain SL254).